The primary structure comprises 298 residues: Tyrosine recombinase XerC (298 aa).

A Core-binding (CB) domain is found at 2–88 (TDLHTDVERY…ALRSFFDWLV (87 aa)). The Tyr recombinase domain maps to 109 to 288 (HLPKNIDVDD…DFQHLASVYD (180 aa)). Residues Arg148, Lys172, His240, Arg243, and His266 contribute to the active site. Tyr275 (O-(3'-phospho-DNA)-tyrosine intermediate) is an active-site residue.

Belongs to the 'phage' integrase family. XerC subfamily. In terms of assembly, forms a cyclic heterotetrameric complex composed of two molecules of XerC and two molecules of XerD, in which XerC interacts with XerD via its C-terminal region, XerD interacts with XerC via its C-terminal region and so on.

The protein localises to the cytoplasm. With respect to regulation, ftsK may regulate the catalytic switch between XerC and XerD in the heterotetrameric complex during the two steps of the recombination process. Its function is as follows. Site-specific tyrosine recombinase, which acts by catalyzing the cutting and rejoining of the recombining DNA molecules. Binds cooperatively to specific DNA consensus sequences that are separated from XerD binding sites by a short central region, forming the heterotetrameric XerC-XerD complex that recombines DNA substrates. The complex is essential to convert dimers of the bacterial chromosome into monomers to permit their segregation at cell division. It also contributes to the segregational stability of plasmids. In the complex XerC specifically exchanges the top DNA strands. The chain is Tyrosine recombinase XerC from Escherichia coli O6:K15:H31 (strain 536 / UPEC).